The primary structure comprises 556 residues: Membrane protein insertase YidC (556 aa).

A run of 5 helical transmembrane segments spans residues 6–26 (IVLYMALALIGLSLWNAWQID), 332–352 (LDLTVDYGILWFLSSLLFSLM), 358–378 (VVGNWGWSIVLVTVLIKLAFY), 428–448 (LGGCLPILIQIPVFIALYWVL), and 501–521 (VMMFLPILFTGLFWNFPSGLV).

It belongs to the OXA1/ALB3/YidC family. Type 1 subfamily. In terms of assembly, interacts with the Sec translocase complex via SecD. Specifically interacts with transmembrane segments of nascent integral membrane proteins during membrane integration.

The protein resides in the cell inner membrane. In terms of biological role, required for the insertion and/or proper folding and/or complex formation of integral membrane proteins into the membrane. Involved in integration of membrane proteins that insert both dependently and independently of the Sec translocase complex, as well as at least some lipoproteins. Aids folding of multispanning membrane proteins. In Legionella pneumophila (strain Corby), this protein is Membrane protein insertase YidC.